The following is a 311-amino-acid chain: MAAAPRTVLISGCSSGIGLELAVQLAHDPKKRYQVVATMRDLGKKETLEAAAGEALGQTLTVAQLDVCSDESVAQCLSCIQGEVDVLVNNAGMGLVGPLEGLSLAAMQNVFDTNFFGAVRLVKAVLPGMKRRRQGHIVVISSVMGLQGVIFNDVYAASKFALEGFFESLAIQLLQFNIFISLVEPGPVVTEFEGKLLAQVSMAEFPGTDPETLHYFRDLYLPASRKLFCSVGQNPQDVVQAIVNVISSTRPPLRRQTNIRYSPLTTLKTVDSSGSLYVRTTHRLLFRCPRLLNLGLQCLSCGCLPTRVRPR.

Residue 9–18 participates in NADP(+) binding; the sequence is LISGCSSGIG. 3 helical membrane-spanning segments follow: residues 86 to 106, 137 to 157, and 169 to 189; these read VLVNNAGMGLVGPLEGLSLAA, IVVISSVMGLQGVIFNDVYAA, and LAIQLLQFNIFISLVEPGPVV. Position 142 (serine 142) interacts with substrate. Tyrosine 155 acts as the Proton acceptor in catalysis.

It belongs to the short-chain dehydrogenases/reductases (SDR) family. In terms of tissue distribution, detected in photoreceptor outer segments in the retina (at protein level).

The protein resides in the membrane. The enzyme catalyses all-trans-retinol + NADP(+) = all-trans-retinal + NADPH + H(+). Functionally, retinol dehydrogenase with a clear preference for NADP. Converts all-trans-retinal to all-trans-retinol. May play a role in the regeneration of visual pigment at high light intensity. This is Retinol dehydrogenase 8 (RDH8) from Homo sapiens (Human).